Consider the following 235-residue polypeptide: Phosphoglycolate phosphatase (235 aa).

Asp14 acts as the Nucleophile in catalysis. Residues Asp14, Asp16, and Asp177 each contribute to the Mg(2+) site.

The protein belongs to the HAD-like hydrolase superfamily. CbbY/CbbZ/Gph/YieH family. The cofactor is Mg(2+).

It catalyses the reaction 2-phosphoglycolate + H2O = glycolate + phosphate. It participates in organic acid metabolism; glycolate biosynthesis; glycolate from 2-phosphoglycolate: step 1/1. Functionally, specifically catalyzes the dephosphorylation of 2-phosphoglycolate. Is involved in the dissimilation of the intracellular 2-phosphoglycolate formed during the DNA repair of 3'-phosphoglycolate ends, a major class of DNA lesions induced by oxidative stress. The chain is Phosphoglycolate phosphatase from Neisseria meningitidis serogroup A / serotype 4A (strain DSM 15465 / Z2491).